Reading from the N-terminus, the 221-residue chain is Oxaloacetate tautomerase oaa1, mitochondrial (221 aa).

The Mg(2+) site is built by glutamate 59, glutamate 61, and aspartate 93.

The protein belongs to the FAH family. It depends on Mg(2+) as a cofactor. Requires Mn(2+) as cofactor.

The protein resides in the mitochondrion. The protein localises to the cytoplasm. It carries out the reaction oxaloacetate = enol-oxaloacetate. Its function is as follows. Tautomerase that converts enol-oxaloacetate, a strong inhibitor of succinate dehydrogenase, to the physiological keto form of oxaloacetate. This chain is Oxaloacetate tautomerase oaa1, mitochondrial, found in Schizosaccharomyces pombe (strain 972 / ATCC 24843) (Fission yeast).